Here is a 356-residue protein sequence, read N- to C-terminus: MQPSTLQTLTKKALATQHVSKDDYYILERCGLWWHEAPISMYIDDDNQIIIKTLCYKEGIKLNTALVLAVKENNDDLIMLFTEWGANINYGLLFINNEHTRNLCRKLGAKEELETSEILRFFFETKHKITSSNIILCHELFSNNPFLQNVNMVDLRTIIYWELKDLTTNSMLNEIPFSEMLTKYWYGIAVKYNLKEAIQYFCQEYRHFDEWRLICALSFNNVFDLHEICNTTKVHMSINKMMELACMRDNNFLTIYYCFALGANVNRAMLISVKNFRIENMFFCMDLGANVIEHSKTLADIYGYSIIVNILSLKIYKANPILLSKETNPEKINTLLKNYYSKNMLAYDICCIDNYL.

The ANK repeat unit spans residues 61–93 (KLNTALVLAVKENNDDLIMLFTEWGANINYGLL).

It belongs to the asfivirus MGF 360 family.

Functionally, plays a role in virus cell tropism, and may be required for efficient virus replication in macrophages. The polypeptide is Protein MGF 360-3L (Ornithodoros (relapsing fever ticks)).